The following is a 269-amino-acid chain: Formamidopyrimidine-DNA glycosylase (269 aa).

Pro2 (schiff-base intermediate with DNA) is an active-site residue. The Proton donor role is filled by Glu3. Lys57 functions as the Proton donor; for beta-elimination activity in the catalytic mechanism. Positions 90, 109, and 150 each coordinate DNA. The FPG-type zinc finger occupies 235-269 (QVYGRAGEPCRACGTPIESAKHGQRSTFFCPRCQR). The Proton donor; for delta-elimination activity role is filled by Arg259.

It belongs to the FPG family. In terms of assembly, monomer. Zn(2+) is required as a cofactor.

The catalysed reaction is Hydrolysis of DNA containing ring-opened 7-methylguanine residues, releasing 2,6-diamino-4-hydroxy-5-(N-methyl)formamidopyrimidine.. It carries out the reaction 2'-deoxyribonucleotide-(2'-deoxyribose 5'-phosphate)-2'-deoxyribonucleotide-DNA = a 3'-end 2'-deoxyribonucleotide-(2,3-dehydro-2,3-deoxyribose 5'-phosphate)-DNA + a 5'-end 5'-phospho-2'-deoxyribonucleoside-DNA + H(+). Its function is as follows. Involved in base excision repair of DNA damaged by oxidation or by mutagenic agents. Acts as a DNA glycosylase that recognizes and removes damaged bases. Has a preference for oxidized purines, such as 7,8-dihydro-8-oxoguanine (8-oxoG). Has AP (apurinic/apyrimidinic) lyase activity and introduces nicks in the DNA strand. Cleaves the DNA backbone by beta-delta elimination to generate a single-strand break at the site of the removed base with both 3'- and 5'-phosphates. The polypeptide is Formamidopyrimidine-DNA glycosylase (Serratia proteamaculans (strain 568)).